A 298-amino-acid polypeptide reads, in one-letter code: Glycine--tRNA ligase alpha subunit (298 aa).

The protein belongs to the class-II aminoacyl-tRNA synthetase family. In terms of assembly, tetramer of two alpha and two beta subunits.

The protein resides in the cytoplasm. The enzyme catalyses tRNA(Gly) + glycine + ATP = glycyl-tRNA(Gly) + AMP + diphosphate. In Helicobacter hepaticus (strain ATCC 51449 / 3B1), this protein is Glycine--tRNA ligase alpha subunit.